Consider the following 76-residue polypeptide: Dermaseptin-S7 (76 aa).

A signal peptide spans 1–22 (MDILKKSLFLVLFLGLISLSFC). The propeptide occupies 23-45 (EEEKRENEDEEEQEDDEQSEEKR). Residues 25 to 45 (EKRENEDEEEQEDDEQSEEKR) form a disordered region. The span at 30-41 (EDEEEQEDDEQS) shows a compositional bias: acidic residues. At Q73 the chain carries Glutamine amide. The propeptide occupies 75–76 (EQ).

It belongs to the frog skin active peptide (FSAP) family. Dermaseptin subfamily. As to expression, expressed by the skin glands.

The protein resides in the secreted. Antimicrobial peptide. This chain is Dermaseptin-S7, found in Phyllomedusa sauvagei (Sauvage's leaf frog).